A 171-amino-acid polypeptide reads, in one-letter code: Nicotinamide-nucleotide adenylyltransferase (171 aa).

Belongs to the archaeal NMN adenylyltransferase family.

It is found in the cytoplasm. It carries out the reaction beta-nicotinamide D-ribonucleotide + ATP + H(+) = diphosphate + NAD(+). It functions in the pathway cofactor biosynthesis; NAD(+) biosynthesis; NAD(+) from nicotinamide D-ribonucleotide: step 1/1. This is Nicotinamide-nucleotide adenylyltransferase from Methanococcus maripaludis (strain DSM 14266 / JCM 13030 / NBRC 101832 / S2 / LL).